Reading from the N-terminus, the 112-residue chain is UPF0145 protein CD630_17110 (112 aa).

Belongs to the UPF0145 family.

The polypeptide is UPF0145 protein CD630_17110 (Clostridioides difficile (strain 630) (Peptoclostridium difficile)).